The chain runs to 390 residues: 4-O-beta-D-mannosyl-D-glucose phosphorylase (390 aa).

The protein belongs to the glycosyl hydrolase 130 family.

It catalyses the reaction 4-O-beta-D-mannopyranosyl-D-glucopyranose + phosphate = alpha-D-mannose 1-phosphate + D-glucose. Functionally, converts 4-O-beta-D-mannopyranosyl-D-glucopyranose (Man-Glc) to mannose 1-phosphate (Man1P) and glucose. Involved in a mannan catabolic pathway which feeds into glycolysis. The chain is 4-O-beta-D-mannosyl-D-glucose phosphorylase from Bacteroides fragilis (strain ATCC 25285 / DSM 2151 / CCUG 4856 / JCM 11019 / LMG 10263 / NCTC 9343 / Onslow / VPI 2553 / EN-2).